A 254-amino-acid chain; its full sequence is Short-chain dehydrogenase srdF (254 aa).

Residues I18, S37, E67, N95, Y167, K171, V199, and T201 each coordinate NADP(+). Y167 serves as the catalytic Proton donor. K171 acts as the Lowers pKa of active site Tyr in catalysis.

Belongs to the short-chain dehydrogenases/reductases (SDR) family.

Its function is as follows. Short-chain dehydrogenase; part of the gene cluster that mediates the biosynthesis of sordarial, a salicylic aldehyde structurally related to the phytotoxin pyriculol. The most interesting aspect of this pathway is formation of an aromatic product from the highly reducing polyketide synthase srdA. SrdA synthesizes a reduced polyketide chain from one molecule of acetyl-CoA and five molecules of malonyl-CoA. The polyketide chain is then reductively released as an aldehyde. The oxidoreductases srdC, srdD and srdE then oxidize one of the hydroxy groups to facilitate the intramolecular aldol condensation, followed by dehydration to yield a salicylic aldehyde. This aldehyde can undergo facile reduction by endogenous reductases to yield the alcohol 1-hydroxy-2-hydroxymethyl-3-pent-1,3-dienylbenzene. The flavin-dependent srdI counteract against the propensity of the aldehydes to be reduced under physiological conditions and is responsible for reoxidizing 1-hydroxy-2-hydroxymethyl-3-pent-1,3-dienylbenzene back to the salicylic aldehyde. This salicylic aldehyde is then selectively epoxidized by the cupin-domain-containing oxidoreductase srdB to yield the epoxide, which can be hydrolyzed stereoselectively by the hydrolase srdG to give the final product sordarial. This is Short-chain dehydrogenase srdF from Neurospora crassa (strain ATCC 24698 / 74-OR23-1A / CBS 708.71 / DSM 1257 / FGSC 987).